The primary structure comprises 91 residues: Small ribosomal subunit protein uS19 (91 aa).

The disordered stretch occupies residues 72 to 91 (GEFSPTRTYTGHGSEKGKKK).

The protein belongs to the universal ribosomal protein uS19 family.

Protein S19 forms a complex with S13 that binds strongly to the 16S ribosomal RNA. The chain is Small ribosomal subunit protein uS19 from Mycoplasma mobile (strain ATCC 43663 / 163K / NCTC 11711) (Mesomycoplasma mobile).